A 248-amino-acid polypeptide reads, in one-letter code: UDP-2,3-diacylglucosamine hydrolase (248 aa).

Mn(2+) contacts are provided by Asp8, His10, Asp41, Asn79, and His114. 79–80 provides a ligand contact to substrate; sequence NR. Residues Asp122, Ser160, Asp171, and His202 each coordinate substrate. His202 and His204 together coordinate Mn(2+).

This sequence belongs to the LpxH family. Requires Mn(2+) as cofactor.

It is found in the cell inner membrane. The enzyme catalyses UDP-2-N,3-O-bis[(3R)-3-hydroxytetradecanoyl]-alpha-D-glucosamine + H2O = 2-N,3-O-bis[(3R)-3-hydroxytetradecanoyl]-alpha-D-glucosaminyl 1-phosphate + UMP + 2 H(+). It functions in the pathway glycolipid biosynthesis; lipid IV(A) biosynthesis; lipid IV(A) from (3R)-3-hydroxytetradecanoyl-[acyl-carrier-protein] and UDP-N-acetyl-alpha-D-glucosamine: step 4/6. Hydrolyzes the pyrophosphate bond of UDP-2,3-diacylglucosamine to yield 2,3-diacylglucosamine 1-phosphate (lipid X) and UMP by catalyzing the attack of water at the alpha-P atom. Involved in the biosynthesis of lipid A, a phosphorylated glycolipid that anchors the lipopolysaccharide to the outer membrane of the cell. The sequence is that of UDP-2,3-diacylglucosamine hydrolase from Stenotrophomonas maltophilia (strain R551-3).